The chain runs to 151 residues: Superoxide dismutase [Cu-Zn] 4 (151 aa).

Positions 45, 47, and 62 each coordinate Cu cation. C56 and C145 are disulfide-bonded. 4 residues coordinate Zn(2+): H62, H70, H79, and D82. H120 provides a ligand contact to Cu cation.

It belongs to the Cu-Zn superoxide dismutase family. As to quaternary structure, homodimer. The cofactor is Cu cation. Requires Zn(2+) as cofactor.

It localises to the cytoplasm. It carries out the reaction 2 superoxide + 2 H(+) = H2O2 + O2. Destroys radicals which are normally produced within the cells and which are toxic to biological systems. Protects spores from cellular damage caused by UV LIGHT. The protein is Superoxide dismutase [Cu-Zn] 4 (sodD) of Dictyostelium discoideum (Social amoeba).